We begin with the raw amino-acid sequence, 225 residues long: Prepilin leader peptidase/N-methyltransferase (225 aa).

Over 1–2 (MT) the chain is Periplasmic. A helical transmembrane segment spans residues 3–23 (MLLPLFILVGFIADYFVNAIA). Topologically, residues 24–67 (YHLSPLEDKTALTFRQVLVHFRQKKYAWHDTVPLILCVAAAIAC) are cytoplasmic. The chain crosses the membrane as a helical span at residues 68 to 88 (ALAPFTPIVTGALFLYFCFVL). Over 89 to 103 (TLSVIDFRTQLLPDK) the chain is Periplasmic. A helical membrane pass occupies residues 104–124 (LTLPLLWLGLVFNAQYGLIDL). At 125 to 127 (HDA) the chain is on the cytoplasmic side. A helical transmembrane segment spans residues 128 to 148 (VYGAVAGYGVLWCVYWGVWLV). The Periplasmic segment spans residues 149 to 174 (CHKEGLGYGDFKLLAAAGAWCGWQTL). A helical membrane pass occupies residues 175 to 195 (PMILLIASLGGIGYAIVSQLL). Residues 196 to 202 (QRRTITT) are Cytoplasmic-facing. Residues 203-223 (IAFGPWLALGSMINLGYLAWI) form a helical membrane-spanning segment. Topologically, residues 224 to 225 (SY) are periplasmic.

It belongs to the peptidase A24 family.

It localises to the cell inner membrane. The catalysed reaction is Typically cleaves a -Gly-|-Phe- bond to release an N-terminal, basic peptide of 5-8 residues from type IV prepilin, and then N-methylates the new N-terminal amino group, the methyl donor being S-adenosyl-L-methionine.. Plays a role in type II pseudopili formation by proteolytically removing the leader sequence from substrate proteins and subsequently monomethylating the alpha-amino group of the newly exposed N-terminal phenylalanine. Substrates include proteins required for biogenesis of the type II general secretory apparatus. This Escherichia coli (strain K12) protein is Prepilin leader peptidase/N-methyltransferase (gspO).